The chain runs to 137 residues: Large ribosomal subunit protein uL16 (137 aa).

The protein belongs to the universal ribosomal protein uL16 family. In terms of assembly, part of the 50S ribosomal subunit.

Binds 23S rRNA and is also seen to make contacts with the A and possibly P site tRNAs. The polypeptide is Large ribosomal subunit protein uL16 (Mesoplasma florum (strain ATCC 33453 / NBRC 100688 / NCTC 11704 / L1) (Acholeplasma florum)).